The following is a 287-amino-acid chain: Energy-coupling factor transporter ATP-binding protein EcfA (287 aa).

Residues 19–252 (FEIQNVSFSY…EEFLASSALD (234 aa)) form the ABC transporter domain. 52–59 (GHNGSGKS) is an ATP binding site.

This sequence belongs to the ABC transporter superfamily. Energy-coupling factor EcfA family. Forms a stable energy-coupling factor (ECF) transporter complex composed of 2 membrane-embedded substrate-binding proteins (S component), 2 ATP-binding proteins (A component) and 2 transmembrane proteins (T component).

It localises to the cell membrane. Its function is as follows. ATP-binding (A) component of a common energy-coupling factor (ECF) ABC-transporter complex. Unlike classic ABC transporters this ECF transporter provides the energy necessary to transport a number of different substrates. The chain is Energy-coupling factor transporter ATP-binding protein EcfA from Malacoplasma penetrans (strain HF-2) (Mycoplasma penetrans).